The sequence spans 176 residues: Large ribosomal subunit protein uL30 (176 aa).

Belongs to the universal ribosomal protein uL30 family. As to quaternary structure, part of the 50S ribosomal subunit.

This chain is Large ribosomal subunit protein uL30, found in Pyrobaculum arsenaticum (strain DSM 13514 / JCM 11321 / PZ6).